A 215-amino-acid polypeptide reads, in one-letter code: 3-demethoxyubiquinol 3-hydroxylase (215 aa).

Glu64, Glu94, His97, Glu146, Glu178, and His181 together coordinate Fe cation.

The protein belongs to the COQ7 family. The cofactor is Fe cation.

Its subcellular location is the cell membrane. The catalysed reaction is a 5-methoxy-2-methyl-3-(all-trans-polyprenyl)benzene-1,4-diol + AH2 + O2 = a 3-demethylubiquinol + A + H2O. The protein operates within cofactor biosynthesis; ubiquinone biosynthesis. Its function is as follows. Catalyzes the hydroxylation of 2-nonaprenyl-3-methyl-6-methoxy-1,4-benzoquinol during ubiquinone biosynthesis. This chain is 3-demethoxyubiquinol 3-hydroxylase, found in Pseudomonas fluorescens (strain SBW25).